Reading from the N-terminus, the 625-residue chain is Chaperone protein HtpG (625 aa).

Residues 1-337 (MNIQKKEVYS…SNNLPLNVSR (337 aa)) are a; substrate-binding. The interval 338–552 (EILQDNSITQ…SNEMSTQMAK (215 aa)) is b. The segment at 553–625 (LFSAAGQSVP…ARTNKLILEQ (73 aa)) is c.

This sequence belongs to the heat shock protein 90 family. Homodimer.

Its subcellular location is the cytoplasm. Functionally, molecular chaperone. Has ATPase activity. This is Chaperone protein HtpG from Buchnera aphidicola subsp. Schizaphis graminum (strain Sg).